The chain runs to 102 residues: MKIAVLGDSDTVLGFRLAGVHEAYAFEETPLDIERLKNKLNELIEREDVGIILITERLAEKVEIPDVKLPIILQVPDKSGSKLGEKALREIVRRAIGVELKR.

This sequence belongs to the V-ATPase F subunit family. In terms of assembly, has multiple subunits with at least A(3), B(3), C, D, E, F, H, I and proteolipid K(x).

It is found in the cell membrane. In terms of biological role, component of the A-type ATP synthase that produces ATP from ADP in the presence of a proton gradient across the membrane. The protein is A-type ATP synthase subunit F of Thermococcus kodakarensis (strain ATCC BAA-918 / JCM 12380 / KOD1) (Pyrococcus kodakaraensis (strain KOD1)).